Here is a 132-residue protein sequence, read N- to C-terminus: Small ribosomal subunit protein uS8c (132 aa).

Belongs to the universal ribosomal protein uS8 family. Part of the 30S ribosomal subunit.

It is found in the plastid. The protein resides in the chloroplast. One of the primary rRNA binding proteins, it binds directly to 16S rRNA central domain where it helps coordinate assembly of the platform of the 30S subunit. The polypeptide is Small ribosomal subunit protein uS8c (rps8) (Acorus calamus (Sweet flag)).